An 83-amino-acid chain; its full sequence is UPF0457 protein YnzG (83 aa).

It belongs to the UPF0457 family.

In Bacillus subtilis (strain 168), this protein is UPF0457 protein YnzG (ynzG).